Consider the following 177-residue polypeptide: Large ribosomal subunit protein uL6 (177 aa).

The interval Lys151–Ser177 is disordered. Residues Arg152–Ser177 are compositionally biased toward basic and acidic residues.

This sequence belongs to the universal ribosomal protein uL6 family. In terms of assembly, part of the 50S ribosomal subunit.

Functionally, this protein binds to the 23S rRNA, and is important in its secondary structure. It is located near the subunit interface in the base of the L7/L12 stalk, and near the tRNA binding site of the peptidyltransferase center. The polypeptide is Large ribosomal subunit protein uL6 (Fusobacterium nucleatum subsp. nucleatum (strain ATCC 25586 / DSM 15643 / BCRC 10681 / CIP 101130 / JCM 8532 / KCTC 2640 / LMG 13131 / VPI 4355)).